The sequence spans 373 residues: Anhydro-N-acetylmuramic acid kinase (373 aa).

13 to 20 is an ATP binding site; that stretch reads GTSMDGID.

The protein belongs to the anhydro-N-acetylmuramic acid kinase family.

It catalyses the reaction 1,6-anhydro-N-acetyl-beta-muramate + ATP + H2O = N-acetyl-D-muramate 6-phosphate + ADP + H(+). It functions in the pathway amino-sugar metabolism; 1,6-anhydro-N-acetylmuramate degradation. Its pathway is cell wall biogenesis; peptidoglycan recycling. Catalyzes the specific phosphorylation of 1,6-anhydro-N-acetylmuramic acid (anhMurNAc) with the simultaneous cleavage of the 1,6-anhydro ring, generating MurNAc-6-P. Is required for the utilization of anhMurNAc either imported from the medium or derived from its own cell wall murein, and thus plays a role in cell wall recycling. This chain is Anhydro-N-acetylmuramic acid kinase, found in Brucella abortus (strain 2308).